The chain runs to 355 residues: Guanine nucleotide-binding protein G(z) subunit alpha (355 aa).

A compositionally biased stretch (basic and acidic residues) spans 1–14 (MGCRQSSEEKEAAR). The tract at residues 1-26 (MGCRQSSEEKEAARRSRRIDRHLRSE) is disordered. G2 carries the N-myristoyl glycine lipid modification. The S-palmitoyl cysteine moiety is linked to residue C3. The 324-residue stretch at 32 to 355 (REIKLLLLGT…QNNLKYIGLC (324 aa)) folds into the G-alpha domain. The tract at residues 35–48 (KLLLLGTSNSGKST) is G1 motif. GTP-binding positions include 40 to 47 (GTSNSGKS), 176 to 182 (LRSRDMT), 201 to 205 (DVGGQ), 270 to 273 (NKKD), and A327. Mg(2+)-binding residues include S47 and T182. The G2 motif stretch occupies residues 174–182 (DILRSRDMT). The interval 197 to 206 (FKMVDVGGQR) is G3 motif. A G4 motif region spans residues 266 to 273 (ILFLNKKD). The G5 motif stretch occupies residues 325–330 (TCATDT).

Belongs to the G-alpha family. G(i/o/t/z) subfamily. As to quaternary structure, G-proteins are composed of 3 units; alpha, beta and gamma. The alpha chain contains the guanine nucleotide binding site. Interacts with ADGRB2.

It localises to the membrane. Its function is as follows. Guanine nucleotide-binding proteins (G proteins) are involved as modulators or transducers in various transmembrane signaling systems. This Rattus norvegicus (Rat) protein is Guanine nucleotide-binding protein G(z) subunit alpha (Gnaz).